The sequence spans 141 residues: 6,7-dimethyl-8-ribityllumazine synthase (141 aa).

Residues Phe-11, 42–44 (ALE), and 66–68 (VVI) each bind 5-amino-6-(D-ribitylamino)uracil. (2S)-2-hydroxy-3-oxobutyl phosphate is bound at residue 71 to 72 (ET). Catalysis depends on His-74, which acts as the Proton donor. Asn-98 lines the 5-amino-6-(D-ribitylamino)uracil pocket. Arg-112 serves as a coordination point for (2S)-2-hydroxy-3-oxobutyl phosphate.

This sequence belongs to the DMRL synthase family.

The catalysed reaction is (2S)-2-hydroxy-3-oxobutyl phosphate + 5-amino-6-(D-ribitylamino)uracil = 6,7-dimethyl-8-(1-D-ribityl)lumazine + phosphate + 2 H2O + H(+). It participates in cofactor biosynthesis; riboflavin biosynthesis; riboflavin from 2-hydroxy-3-oxobutyl phosphate and 5-amino-6-(D-ribitylamino)uracil: step 1/2. In terms of biological role, catalyzes the formation of 6,7-dimethyl-8-ribityllumazine by condensation of 5-amino-6-(D-ribitylamino)uracil with 3,4-dihydroxy-2-butanone 4-phosphate. This is the penultimate step in the biosynthesis of riboflavin. This chain is 6,7-dimethyl-8-ribityllumazine synthase, found in Sphingopyxis alaskensis (strain DSM 13593 / LMG 18877 / RB2256) (Sphingomonas alaskensis).